Here is a 319-residue protein sequence, read N- to C-terminus: Acetyl-coenzyme A carboxylase carboxyl transferase subunit alpha (319 aa).

Positions 39-293 constitute a CoA carboxyltransferase C-terminal domain; it reads KLEQKAAQLL…GDAIAEELKG (255 aa).

It belongs to the AccA family. In terms of assembly, acetyl-CoA carboxylase is a heterohexamer composed of biotin carboxyl carrier protein (AccB), biotin carboxylase (AccC) and two subunits each of ACCase subunit alpha (AccA) and ACCase subunit beta (AccD).

It localises to the cytoplasm. It catalyses the reaction N(6)-carboxybiotinyl-L-lysyl-[protein] + acetyl-CoA = N(6)-biotinyl-L-lysyl-[protein] + malonyl-CoA. It participates in lipid metabolism; malonyl-CoA biosynthesis; malonyl-CoA from acetyl-CoA: step 1/1. Component of the acetyl coenzyme A carboxylase (ACC) complex. First, biotin carboxylase catalyzes the carboxylation of biotin on its carrier protein (BCCP) and then the CO(2) group is transferred by the carboxyltransferase to acetyl-CoA to form malonyl-CoA. This is Acetyl-coenzyme A carboxylase carboxyl transferase subunit alpha from Parvibaculum lavamentivorans (strain DS-1 / DSM 13023 / NCIMB 13966).